The following is a 428-amino-acid chain: L-fucose-proton symporter (428 aa).

Helical transmembrane passes span 10–30 (FIVPFVLITSLFALWGFANDI), 51–71 (LVQLAFYGGYGTMAIPAALFA), 78–98 (AGILLGLALYAIGAFLFWPAA), 100–120 (YEIFNFFLVSLYILTFGLAFL), 147–167 (FNPLGSITGMFVASQLVLTNL), 204–224 (IALGFVVVAVFIIIGLKKMPA), 250–270 (EGVIAQAFYVGVQIMCWTFIV), 288–308 (IIAMAIFISSRFISTALMKYL), 311–331 (EFMLMLFAIGGFLSILGVIFI), 339–359 (CLILTSGFMPLMFPTIYGIAL), 371–391 (AGLVMAIVGGALMPPLQGMII), and 401–421 (AVNFSFILPLICFVVIAIYGF).

The protein belongs to the major facilitator superfamily. FHS transporter (TC 2.A.1.7) family.

Its subcellular location is the cell inner membrane. It carries out the reaction L-fucose(in) + H(+)(in) = L-fucose(out) + H(+)(out). Mediates the uptake of L-fucose across the boundary membrane with the concomitant transport of protons into the cell (symport system). The protein is L-fucose-proton symporter (fucP) of Haemophilus influenzae (strain ATCC 51907 / DSM 11121 / KW20 / Rd).